Here is a 326-residue protein sequence, read N- to C-terminus: tRNA uridine(34) hydroxylase (326 aa).

The 95-residue stretch at 123-217 (SDPDVILVDT…YLEEVKQEES (95 aa)) folds into the Rhodanese domain. Cysteine 177 acts as the Cysteine persulfide intermediate in catalysis.

This sequence belongs to the TrhO family.

The enzyme catalyses uridine(34) in tRNA + AH2 + O2 = 5-hydroxyuridine(34) in tRNA + A + H2O. In terms of biological role, catalyzes oxygen-dependent 5-hydroxyuridine (ho5U) modification at position 34 in tRNAs. This Shewanella denitrificans (strain OS217 / ATCC BAA-1090 / DSM 15013) protein is tRNA uridine(34) hydroxylase.